We begin with the raw amino-acid sequence, 418 residues long: Glutamyl-tRNA reductase (418 aa).

Substrate contacts are provided by residues 49-52, Ser109, 114-116, and Gln120; these read TCNR and EPQ. Cys50 (nucleophile) is an active-site residue. Residue 189-194 participates in NADP(+) binding; the sequence is GAGETI.

This sequence belongs to the glutamyl-tRNA reductase family. As to quaternary structure, homodimer.

It catalyses the reaction (S)-4-amino-5-oxopentanoate + tRNA(Glu) + NADP(+) = L-glutamyl-tRNA(Glu) + NADPH + H(+). It functions in the pathway porphyrin-containing compound metabolism; protoporphyrin-IX biosynthesis; 5-aminolevulinate from L-glutamyl-tRNA(Glu): step 1/2. Functionally, catalyzes the NADPH-dependent reduction of glutamyl-tRNA(Glu) to glutamate 1-semialdehyde (GSA). This is Glutamyl-tRNA reductase from Cronobacter sakazakii (strain ATCC BAA-894) (Enterobacter sakazakii).